We begin with the raw amino-acid sequence, 71 residues long: Exodeoxyribonuclease 7 small subunit (71 aa).

This sequence belongs to the XseB family. Heterooligomer composed of large and small subunits.

The protein localises to the cytoplasm. The catalysed reaction is Exonucleolytic cleavage in either 5'- to 3'- or 3'- to 5'-direction to yield nucleoside 5'-phosphates.. Its function is as follows. Bidirectionally degrades single-stranded DNA into large acid-insoluble oligonucleotides, which are then degraded further into small acid-soluble oligonucleotides. In Clostridium botulinum (strain 657 / Type Ba4), this protein is Exodeoxyribonuclease 7 small subunit.